Reading from the N-terminus, the 356-residue chain is tRNA N6-adenosine threonylcarbamoyltransferase (356 aa).

A divalent metal cation-binding residues include His-124, His-128, and Tyr-145. Substrate-binding positions include Tyr-145–Gly-149, Asp-177, Gly-192, Glu-196, and Asn-287. Asp-315 is a binding site for a divalent metal cation.

This sequence belongs to the KAE1 / TsaD family. Component of the EKC/KEOPS complex composed of at least BUD32, CGI121, GON7, KAE1 and PCC1; the whole complex dimerizes. The cofactor is a divalent metal cation.

It is found in the cytoplasm. Its subcellular location is the nucleus. The enzyme catalyses L-threonylcarbamoyladenylate + adenosine(37) in tRNA = N(6)-L-threonylcarbamoyladenosine(37) in tRNA + AMP + H(+). Functionally, component of the EKC/KEOPS complex that is required for the formation of a threonylcarbamoyl group on adenosine at position 37 (t(6)A37) in tRNAs that read codons beginning with adenine. The complex is probably involved in the transfer of the threonylcarbamoyl moiety of threonylcarbamoyl-AMP (TC-AMP) to the N6 group of A37. KAE1 likely plays a direct catalytic role in this reaction, but requires other protein(s) of the complex to fulfill this activity. The EKC/KEOPS complex also promotes both telomere uncapping and telomere elongation. The complex is required for efficient recruitment of transcriptional coactivators. The chain is tRNA N6-adenosine threonylcarbamoyltransferase from Yarrowia lipolytica (strain CLIB 122 / E 150) (Yeast).